We begin with the raw amino-acid sequence, 331 residues long: Nucleoporin Nup35 (331 aa).

2 disordered regions span residues 1–63 (MEPM…HELN) and 79–110 (AHTAVGANSSTTAHGQTHSHHQTGPPTQGLFD). 3 stretches are compositionally biased toward polar residues: residues 8-20 (SPVNSPGSNQTQY), 35-56 (HKNTLSPKTGRSNISFATSPGG), and 84-104 (GANSSTTAHGQTHSHHQTGPP). The 82-residue stretch at 187-268 (RLSDFWVTIF…SRCTDRSVID (82 aa)) folds into the RRM Nup35-type domain.

This sequence belongs to the Nup35 family. Interacts with Nup154.

Its subcellular location is the nucleus. It localises to the nuclear pore complex. Functions as a component of the nuclear pore complex (NPC). May have a role in the organization of the inner nuclear membrane proteins at the nuclear envelope together with Nup154. The protein is Nucleoporin Nup35 of Drosophila melanogaster (Fruit fly).